A 114-amino-acid chain; its full sequence is Acetyltransferase At1g77540 (114 aa).

Threonine 2 carries the post-translational modification N-acetylthreonine. The region spanning 18–106 is the N-acetyltransferase domain; sequence KIVWNEGKRR…RNPSWKPLIH (89 aa). Residues 52–55 and 61–66 contribute to the CoA site; these read HTYV and GLGLAS. Catalysis depends on cysteine 87, which acts as the Nucleophile. CoA contacts are provided by residues 88 to 89, threonine 93, and arginine 97; that span reads SY.

It is found in the peroxisome. In terms of biological role, possesses in vitro histone acetyltransferase activity with histones H3 and H4. The sequence is that of Acetyltransferase At1g77540 from Arabidopsis thaliana (Mouse-ear cress).